A 93-amino-acid chain; its full sequence is Small ribosomal subunit protein uS19 (93 aa).

This sequence belongs to the universal ribosomal protein uS19 family.

Functionally, protein S19 forms a complex with S13 that binds strongly to the 16S ribosomal RNA. The sequence is that of Small ribosomal subunit protein uS19 from Frankia casuarinae (strain DSM 45818 / CECT 9043 / HFP020203 / CcI3).